We begin with the raw amino-acid sequence, 180 residues long: UPF0227 protein PC1_2487 (180 aa).

This sequence belongs to the UPF0227 family.

This is UPF0227 protein PC1_2487 from Pectobacterium carotovorum subsp. carotovorum (strain PC1).